A 174-amino-acid polypeptide reads, in one-letter code: Crossover junction endodeoxyribonuclease RuvC (174 aa).

Residues Asp16, Glu76, and Asp148 contribute to the active site. Mg(2+) is bound by residues Asp16, Glu76, and Asp148.

The protein belongs to the RuvC family. Homodimer which binds Holliday junction (HJ) DNA. The HJ becomes 2-fold symmetrical on binding to RuvC with unstacked arms; it has a different conformation from HJ DNA in complex with RuvA. In the full resolvosome a probable DNA-RuvA(4)-RuvB(12)-RuvC(2) complex forms which resolves the HJ. Mg(2+) is required as a cofactor.

The protein resides in the cytoplasm. It carries out the reaction Endonucleolytic cleavage at a junction such as a reciprocal single-stranded crossover between two homologous DNA duplexes (Holliday junction).. In terms of biological role, the RuvA-RuvB-RuvC complex processes Holliday junction (HJ) DNA during genetic recombination and DNA repair. Endonuclease that resolves HJ intermediates. Cleaves cruciform DNA by making single-stranded nicks across the HJ at symmetrical positions within the homologous arms, yielding a 5'-phosphate and a 3'-hydroxyl group; requires a central core of homology in the junction. The consensus cleavage sequence is 5'-(A/T)TT(C/G)-3'. Cleavage occurs on the 3'-side of the TT dinucleotide at the point of strand exchange. HJ branch migration catalyzed by RuvA-RuvB allows RuvC to scan DNA until it finds its consensus sequence, where it cleaves and resolves the cruciform DNA. This chain is Crossover junction endodeoxyribonuclease RuvC, found in Rhodopseudomonas palustris (strain ATCC BAA-98 / CGA009).